Reading from the N-terminus, the 211-residue chain is Thiamine-phosphate synthase (211 aa).

4-amino-2-methyl-5-(diphosphooxymethyl)pyrimidine contacts are provided by residues Gln39–Arg41 and Asn71. Mg(2+) contacts are provided by Asp72 and Asp91. 4-amino-2-methyl-5-(diphosphooxymethyl)pyrimidine is bound at residue Ser110. 2-[(2R,5Z)-2-carboxy-4-methylthiazol-5(2H)-ylidene]ethyl phosphate is bound at residue Thr136 to Thr138. Position 139 (Lys139) interacts with 4-amino-2-methyl-5-(diphosphooxymethyl)pyrimidine. 2-[(2R,5Z)-2-carboxy-4-methylthiazol-5(2H)-ylidene]ethyl phosphate is bound by residues Gly167 and Val187–Ser188.

Belongs to the thiamine-phosphate synthase family. Mg(2+) is required as a cofactor.

It catalyses the reaction 2-[(2R,5Z)-2-carboxy-4-methylthiazol-5(2H)-ylidene]ethyl phosphate + 4-amino-2-methyl-5-(diphosphooxymethyl)pyrimidine + 2 H(+) = thiamine phosphate + CO2 + diphosphate. The catalysed reaction is 2-(2-carboxy-4-methylthiazol-5-yl)ethyl phosphate + 4-amino-2-methyl-5-(diphosphooxymethyl)pyrimidine + 2 H(+) = thiamine phosphate + CO2 + diphosphate. The enzyme catalyses 4-methyl-5-(2-phosphooxyethyl)-thiazole + 4-amino-2-methyl-5-(diphosphooxymethyl)pyrimidine + H(+) = thiamine phosphate + diphosphate. It functions in the pathway cofactor biosynthesis; thiamine diphosphate biosynthesis; thiamine phosphate from 4-amino-2-methyl-5-diphosphomethylpyrimidine and 4-methyl-5-(2-phosphoethyl)-thiazole: step 1/1. Functionally, condenses 4-methyl-5-(beta-hydroxyethyl)thiazole monophosphate (THZ-P) and 2-methyl-4-amino-5-hydroxymethyl pyrimidine pyrophosphate (HMP-PP) to form thiamine monophosphate (TMP). The polypeptide is Thiamine-phosphate synthase (Xanthobacter autotrophicus (strain ATCC BAA-1158 / Py2)).